A 227-amino-acid polypeptide reads, in one-letter code: MTYPVIRELPPEMRPRERMLKEGAGSLTEIDLLAIMLRTGTSKVSVLELAAELFSHFKDLRALSQATIEELSQIKGVGPVKAVQVKAALELGRRLAAMPAETRVIIRCPEDVCGLVMEDLRDLDREHFLALLLNTKNQVLARETISIGTLNSSVVHPRELFKVAIRRSAASMILVHNHPSGDPTPSREDIVLTKRLIEAGEIIGIDVLDHIIIGDNKFTSLKSKGLI.

The 123-residue stretch at 105 to 227 folds into the MPN domain; sequence IIRCPEDVCG…FTSLKSKGLI (123 aa). Zn(2+) contacts are provided by His176, His178, and Asp189. Positions 176–189 match the JAMM motif motif; that stretch reads HNHPSGDPTPSRED.

The protein belongs to the UPF0758 family.

The chain is UPF0758 protein Dred_2549 from Desulforamulus reducens (strain ATCC BAA-1160 / DSM 100696 / MI-1) (Desulfotomaculum reducens).